The sequence spans 589 residues: Arginine--tRNA ligase (589 aa).

A 'HIGH' region motif is present at residues 131 to 141 (ANPTGPLHVGH).

It belongs to the class-I aminoacyl-tRNA synthetase family. Monomer.

The protein resides in the cytoplasm. It catalyses the reaction tRNA(Arg) + L-arginine + ATP = L-arginyl-tRNA(Arg) + AMP + diphosphate. This is Arginine--tRNA ligase from Legionella pneumophila subsp. pneumophila (strain Philadelphia 1 / ATCC 33152 / DSM 7513).